The sequence spans 135 residues: MLLLRWKRFWFLSLGILLFSGVVSLMLFNLSESISFFYLPSDVARVVASNREIKVGGIIKAIKKSKDGVRFLLSDGAAEIEVLYEGILPSLVQDGINVVVVARFEGGLLLAKRVLVKHDERYYPPEDFIKSVRGE.

Topologically, residues 1 to 8 (MLLLRWKR) are cytoplasmic. Residues 9-29 (FWFLSLGILLFSGVVSLMLFN) form a helical; Signal-anchor for type II membrane protein membrane-spanning segment. The Periplasmic segment spans residues 30–135 (LSESISFFYL…EDFIKSVRGE (106 aa)). Histidine 118 and tyrosine 122 together coordinate heme.

This sequence belongs to the CcmE/CycJ family.

It is found in the cell inner membrane. Functionally, heme chaperone required for the biogenesis of c-type cytochromes. Transiently binds heme delivered by CcmC and transfers the heme to apo-cytochromes in a process facilitated by CcmF and CcmH. The sequence is that of Cytochrome c-type biogenesis protein CcmE from Neorickettsia sennetsu (strain ATCC VR-367 / Miyayama) (Ehrlichia sennetsu).